The sequence spans 230 residues: Ribose-5-phosphate isomerase A (230 aa).

Residues 29–32, 85–88, and 98–101 contribute to the substrate site; these read TGST, DGAD, and KGGG. Glu107 acts as the Proton acceptor in catalysis. Lys125 is a binding site for substrate.

Belongs to the ribose 5-phosphate isomerase family. In terms of assembly, homodimer.

The catalysed reaction is aldehydo-D-ribose 5-phosphate = D-ribulose 5-phosphate. The protein operates within carbohydrate degradation; pentose phosphate pathway; D-ribose 5-phosphate from D-ribulose 5-phosphate (non-oxidative stage): step 1/1. In terms of biological role, catalyzes the reversible conversion of ribose-5-phosphate to ribulose 5-phosphate. The chain is Ribose-5-phosphate isomerase A from Staphylococcus epidermidis (strain ATCC 35984 / DSM 28319 / BCRC 17069 / CCUG 31568 / BM 3577 / RP62A).